Reading from the N-terminus, the 98-residue chain is UPF0235 protein APJL_1398 (98 aa).

The protein belongs to the UPF0235 family.

This Actinobacillus pleuropneumoniae serotype 3 (strain JL03) protein is UPF0235 protein APJL_1398.